The primary structure comprises 870 residues: MVKEKKKADKKGEKSARSPSSLSDNLDFSKQDGNTTRQEMSPAGVPLLGMQLNEVKPKKDRQNVQQNEDATQYEESILTKLIVESYEGEKVRGLYEGEGFAAFQGGCTYRGMFSEGLMHGQGTYIWADGLKYEGDFVKNVPMNHGVYTWPDGSMYEGEVVNGMRNGFGMFKCSTQPVSYIGHWCNGKRHGKGSIYYNQEGTCWYEGDWVQNIKKGWGIRCYKSGNIYEGQWEDNMRHGEGRMRWLTTNEEYTGRWERGIQNGFGTHTWFLKRIRSSQYPLRNEYIGEFVNGYRHGRGKFYYASGAMYDGEWVSNKKHGMGRLTFKNGRVYEGAFSNDHIAGFPDLEVEFISCLDLSSGVAPRLSRSAELIRKLDGSESHSVLGSSIELDLNLLLDMYPETVQPEEKKQVEYAVLRNITELRRIYSFYSSLGCGHSLDNTFLMTKLHFWRFLKDCKFHHHKLTLADMDRILSANNDIPVEEIHSPFTTILLRTFLNYLLHLAYHIYHEEFQKRSPSLFLCFTKLMTENIRPNAFQIKGNLFREQQRTLYSMSYMNKCWEIYLAYCRPSAAPPHEPTMKMRHFLWMLKDFKMINKELTAATFMEVIAEDNRFIYDGIDSNFEPELVFLEFFEALLSFAFICVTDQMTKSYTNVPADDVSGNKHETIYTILNQDAQNKSPSAVMSHESDAAHSDSARSSSSKLELSPDVNKIRKSEPKIKKSVSHERVSKMNFKLTGKGITFFSSESKKYERPKDDREEEFNTWVNNMYVFFVNTLFHAYKREEAIKEKIRADRLRSTAQAQQRKMEDDELEARLNIFILREEEAKRHDYEVDITVLKEPADVSSSHLILDPPKEDVTVSPSSKTITSKKKKK.

Basic and acidic residues predominate over residues 1–16 (MVKEKKKADKKGEKSA). The interval 1–43 (MVKEKKKADKKGEKSARSPSSLSDNLDFSKQDGNTTRQEMSPA) is disordered. Polar residues predominate over residues 17 to 39 (RSPSSLSDNLDFSKQDGNTTRQE). 10 MORN repeats span residues 86-108 (YEGE…GGCT), 109-131 (YRGM…DGLK), 132-154 (YEGD…DGSM), 155-177 (YEGE…TQPV), 179-201 (YIGH…QEGT), 204-226 (YEGD…SGNI), 227-249 (YEGQ…TTNE), 251-273 (YTGR…LKRI), 284-306 (YIGE…SGAM), and 307-329 (YDGE…NGRV). The segment at 674–704 (NKSPSAVMSHESDAAHSDSARSSSSKLELSP) is disordered. Over residues 683–692 (HESDAAHSDS) the composition is skewed to basic and acidic residues. Residues 693–703 (ARSSSSKLELS) are compositionally biased toward low complexity. Positions 784–811 (KEKIRADRLRSTAQAQQRKMEDDELEAR) form a coiled coil. A disordered region spans residues 840 to 870 (VSSSHLILDPPKEDVTVSPSSKTITSKKKKK).

Interacts with RSPH6A. Does not appear to be part of the axonemal radial spoke complexes 1 or 2.

It is found in the cytoplasm. Its subcellular location is the cytoskeleton. It localises to the cilium axoneme. The protein localises to the cell projection. The protein resides in the cilium. It is found in the flagellum. Functionally, may function as part of the axonemal radial spoke complex 3 (RS3). Radial spoke complexes are important for ciliary motility. In Homo sapiens (Human), this protein is Radial spoke head 10 homolog B (RSPH10B).